We begin with the raw amino-acid sequence, 285 residues long: Neuralized-like protein 2 (285 aa).

Residues 1–28 (MADPSEHVGLGGPRSPARPEPPPTRFHQ) are disordered. Residues 23 to 244 (PTRFHQVHGA…STKSVRLVQL (222 aa)) enclose the NHR domain. The region spanning 250–285 (SLQTLCRLVIHKRVVHRLAIDVLHLPKGLKDFCKYE) is the SOCS box domain.

In terms of assembly, probable component the ECS(NEURL2) E3 ubiquitin-protein ligase complex consisting of ELOB/Elongin B, ELOC/Elongin C, CUL5, RBX1 and NEURL2. Interacts with CTNNB1. As to expression, expressed specifically in skeletal and cardiac muscles.

It localises to the cytoplasm. Its pathway is protein modification; protein ubiquitination. Plays an important role in the process of myofiber differentiation and maturation. Probable substrate-recognition component of a SCF-like ECS (Elongin BC-CUL2/5-SOCS-box protein) E3 ubiquitin-protein ligase complex, which mediates the ubiquitination of proteins. Probably contributes to catalysis through recognition and positioning of the substrate and the ubiquitin-conjugating enzyme. During myogenesis, controls the ubiquitination and degradation of the specific pool of CTNNB1/beta-catenin located at the sarcolemma. The protein is Neuralized-like protein 2 (Neurl2) of Mus musculus (Mouse).